Reading from the N-terminus, the 107-residue chain is Cytochrome c2 (107 aa).

Pyrrolidone carboxylic acid is present on glutamine 1. Heme c-binding residues include cysteine 13, cysteine 16, histidine 17, and methionine 79.

The protein belongs to the cytochrome c family. Binds 1 heme c group covalently per subunit.

It is found in the periplasm. Functionally, cytochrome c2 is found mainly in purple, non-sulfur, photosynthetic bacteria where it functions as the electron donor to the oxidized bacteriochlorophyll in the photophosphorylation pathway. However, it may also have a role in the respiratory chain and is found in some non-photosynthetic bacteria. The protein is Cytochrome c2 of Rhodoplanes tepidamans (Rhodoplanes cryptolactis).